The following is a 117-amino-acid chain: Large ribosomal subunit protein uL18 (117 aa).

This sequence belongs to the universal ribosomal protein uL18 family. In terms of assembly, part of the 50S ribosomal subunit; part of the 5S rRNA/L5/L18/L25 subcomplex. Contacts the 5S and 23S rRNAs.

Its function is as follows. This is one of the proteins that bind and probably mediate the attachment of the 5S RNA into the large ribosomal subunit, where it forms part of the central protuberance. The chain is Large ribosomal subunit protein uL18 from Polynucleobacter asymbioticus (strain DSM 18221 / CIP 109841 / QLW-P1DMWA-1) (Polynucleobacter necessarius subsp. asymbioticus).